We begin with the raw amino-acid sequence, 707 residues long: B-cell lymphoma 6 protein homolog (707 aa).

Residues 32–99 (TDVVIVVSRE…MYTSRLNLRE (68 aa)) enclose the BTB domain. A disordered region spans residues 275 to 350 (HYSVPEGPKP…QPNSPTESCS (76 aa)). Positions 299–315 (KASKEEERPSSEDEIAL) are enriched in basic and acidic residues. Residues 331–350 (SPQSPQKSDCQPNSPTESCS) show a composition bias toward polar residues. Ser334 carries the phosphoserine modification. The residue at position 344 (Ser344) is a Phosphoserine; by MAPK1. A Phosphoserine modification is found at Ser362. A required for interaction with NuRD complex and for transcriptional repressor activity region spans residues 377 to 380 (KKYK). Lys380 bears the N6-acetyllysine; by EP300 mark. At Ser405 the chain carries Phosphoserine. The tract at residues 405–469 (SPRAYPAPPA…RSSSESHSPL (65 aa)) is disordered. Pro residues predominate over residues 409 to 420 (YPAPPACQPPME). Over residues 425–452 (DLQSPTKLSASGEDSTIPQASRLNNLVN) the composition is skewed to polar residues. Residues 458–467 (SPRSSSESHS) show a composition bias toward low complexity. 6 consecutive C2H2-type zinc fingers follow at residues 519–542 (FFCNECDCRFSEEASLKRHTLQTH), 547–569 (YKCDRCQASFRYKGNLASHKTVH), 575–597 (YRCNICGAQFNRPANLKTHTRIH), 603–625 (YKCETCGARFVQVAHLRAHVLIH), 631–653 (YPCEICGTRFRHLQTLKSHLRIH), and 659–682 (YHCEKCNLHFRHKSQLRLHLRQKH).

In terms of assembly, homodimer. Interacts (via BTB domain) with the corepressors BCOR, NCOR1 and SMRT/NCOR2; the interactions are direct. Forms preferably ternary complexes with BCOR and SMRT/NCOR2 on target gene promoters but, on enhancer elements, interacts with SMRT/NCOR2 and HDAC3 to repress proximal gene expression. Interacts with histone deacetylases HDAC2, HDAC5 and HDAC9 (via the catalytic domain). Interacts with ZBTB7 and BCL6B. Interacts with SCF(FBXO11) complex; the interaction is independent of phosphorylation and promotes ubiquitination. Interacts (when phosphorylated) with PIN1; the interaction is required for BCL6 degradation upon genotoxic stress. Interacts with ZBTB17; inhibits ZBTB17 transcriptional activity. Interacts with CTBP1, autoinhibits its transcriptional expression. Interacts with NOTCH1 NCID and SIRT1; leads to a epigenetic repression of selective NOTCH1-target genes. Interacts (nor via BTB domain neither acetylated) with the NuRD complex components CHD4, HDAC1, MBD3 and MTA3; the interaction with MTA3 inhibits BCL6 acetylation and is required for BCL6 transpriptional repression. Phosphorylated by MAPK1 in response to antigen receptor activation at Ser-334 and Ser-344. Phosphorylated by ATM in response to genotoxic stress. Phosphorylation induces its degradation by ubiquitin/proteasome pathway. In terms of processing, polyubiquitinated. Polyubiquitinated by SCF(FBXO11), leading to its degradation by the proteasome. Ubiquitinated by the SCF(FBXL17) complex, leading to its degradation by the proteasome: ubiquitination by the SCF(FBXL17) complex takes place when aberrant BTB domain dimers are formed. Post-translationally, acetylated at Lys-380 by EP300 which inhibits the interaction with NuRD complex and the transcriptional repressor function. Deacetylated by HDAC- and SIR2-dependent pathways. In terms of tissue distribution, expressed at least in germinal center B-cells of spleen.

The protein localises to the nucleus. Transcriptional repressor mainly required for germinal center (GC) formation and antibody affinity maturation which has different mechanisms of action specific to the lineage and biological functions. Forms complexes with different corepressors and histone deacetylases to repress the transcriptional expression of different subsets of target genes. Represses its target genes by binding directly to the DNA sequence 5'-TTCCTAGAA-3' (BCL6-binding site) or indirectly by repressing the transcriptional activity of transcription factors. In GC B-cells, represses genes that function in differentiation, inflammation, apoptosis and cell cycle control, also autoregulates its transcriptional expression and up-regulates, indirectly, the expression of some genes important for GC reactions, such as AICDA, through the repression of microRNAs expression, like miR155. An important function is to allow GC B-cells to proliferate very rapidly in response to T-cell dependent antigens and tolerate the physiological DNA breaks required for immunglobulin class switch recombination and somatic hypermutation without inducing a p53/TP53-dependent apoptotic response. In follicular helper CD4(+) T-cells (T(FH) cells), promotes the expression of T(FH)-related genes but inhibits the differentiation of T(H)1, T(H)2 and T(H)17 cells. Also required for the establishment and maintenance of immunological memory for both T- and B-cells. Suppresses macrophage proliferation through competition with STAT5 for STAT-binding motifs binding on certain target genes, such as CCL2 and CCND2. In response to genotoxic stress, controls cell cycle arrest in GC B-cells in both p53/TP53-dependedent and -independent manners. Besides, also controls neurogenesis through the alteration of the composition of NOTCH-dependent transcriptional complexes at selective NOTCH targets, such as HES5, including the recruitment of the deacetylase SIRT1 and resulting in an epigenetic silencing leading to neuronal differentiation. This Mus musculus (Mouse) protein is B-cell lymphoma 6 protein homolog (Bcl6).